The following is a 637-amino-acid chain: Chaperone protein HtpG (637 aa).

An a; substrate-binding region spans residues 1–345 (MSQQETHGFQ…SNDLPLNVSR (345 aa)). The segment at 346-562 (EILQDNHITK…EGEMSTQMIK (217 aa)) is b. The tract at residues 563-637 (LMQAAGQPVP…MNQMLLANLK (75 aa)) is c.

The protein belongs to the heat shock protein 90 family. In terms of assembly, homodimer.

Its subcellular location is the cytoplasm. In terms of biological role, molecular chaperone. Has ATPase activity. The sequence is that of Chaperone protein HtpG from Shewanella oneidensis (strain ATCC 700550 / JCM 31522 / CIP 106686 / LMG 19005 / NCIMB 14063 / MR-1).